A 95-amino-acid chain; its full sequence is Small ribosomal subunit protein bS18 (95 aa).

The protein belongs to the bacterial ribosomal protein bS18 family. As to quaternary structure, part of the 30S ribosomal subunit. Forms a tight heterodimer with protein bS6.

Binds as a heterodimer with protein bS6 to the central domain of the 16S rRNA, where it helps stabilize the platform of the 30S subunit. In Rickettsia canadensis (strain McKiel), this protein is Small ribosomal subunit protein bS18.